The following is a 412-amino-acid chain: Polyferredoxin protein MvhB (412 aa).

4Fe-4S ferredoxin-type domains follow at residues 1–29 (MIVV…VTPE), 30–57 (DVIY…IEDL), 67–96 (GRIV…LDEG), 97–127 (KVKK…VEGI), 138–166 (EGPI…LEKV), 168–197 (GVIE…ISGK), 207–236 (RKFE…PKSS), 238–266 (LTVE…LDVE), 276–305 (EGLV…VVTR), 314–345 (EKVD…LVDM), 357–386 (KRVQ…LTDE), and 385–412 (DEKV…LSLK). Positions 9, 12, 15, and 19 each coordinate [4Fe-4S] cluster. Positions 76, 79, 82, 86, 107, 110, 113, 117, 146, 149, 152, 156, 177, 180, 183, 187, 216, 219, 222, 226, 246, 249, 252, and 256 each coordinate [4Fe-4S] cluster. Residues Cys-325, Cys-328, Cys-331, Cys-335, Cys-366, Cys-369, Cys-372, Cys-376, Cys-394, Cys-397, Cys-400, and Cys-404 each coordinate [4Fe-4S] cluster.

The cofactor is [4Fe-4S] cluster.

In Methanothermobacter marburgensis (strain ATCC BAA-927 / DSM 2133 / JCM 14651 / NBRC 100331 / OCM 82 / Marburg) (Methanobacterium thermoautotrophicum), this protein is Polyferredoxin protein MvhB (mvhB).